A 389-amino-acid chain; its full sequence is Dirigent protein 25 (389 aa).

A signal peptide spans 1 to 21; sequence MAGCKVLFFLILALAITFVSA. Low complexity-rich tracts occupy residues 50–68, 77–86, and 98–135; these read GPFP…SGTG, LGTNTGPGPL, and SSGT…PLPT. The tract at residues 50-135 is disordered; that stretch reads GPFPTANSGP…PGSGSGPLPT (86 aa).

Belongs to the plant dirigent protein family. As to quaternary structure, homodimer.

The protein localises to the secreted. Its subcellular location is the extracellular space. The protein resides in the apoplast. Functionally, dirigent proteins impart stereoselectivity on the phenoxy radical-coupling reaction, yielding optically active lignans from two molecules of coniferyl alcohol in the biosynthesis of lignans, flavonolignans, and alkaloids and thus plays a central role in plant secondary metabolism. This Arabidopsis thaliana (Mouse-ear cress) protein is Dirigent protein 25 (DIR25).